Here is a 124-residue protein sequence, read N- to C-terminus: Large ribosomal subunit protein bL36m (124 aa).

Belongs to the bacterial ribosomal protein bL36 family. In terms of assembly, component of the mitochondrial large ribosomal subunit (mt-LSU). Mature N.crassa 74S mitochondrial ribosomes consist of a small (37S) and a large (54S) subunit. The 37S small subunit contains a 16S ribosomal RNA (16S mt-rRNA) and 32 different proteins. The 54S large subunit contains a 23S rRNA (23S mt-rRNA) and 42 different proteins. bL36m has a zinc binding site.

The protein resides in the mitochondrion. In terms of biological role, component of the mitochondrial ribosome (mitoribosome), a dedicated translation machinery responsible for the synthesis of mitochondrial genome-encoded proteins, including at least some of the essential transmembrane subunits of the mitochondrial respiratory chain. The mitoribosomes are attached to the mitochondrial inner membrane and translation products are cotranslationally integrated into the membrane. The chain is Large ribosomal subunit protein bL36m (rtc6) from Neurospora crassa (strain ATCC 24698 / 74-OR23-1A / CBS 708.71 / DSM 1257 / FGSC 987).